The primary structure comprises 503 residues: ATP synthase subunit alpha (503 aa).

170-177 is an ATP binding site; sequence GDKQTGKT.

It belongs to the ATPase alpha/beta chains family. As to quaternary structure, F-type ATPases have 2 components, CF(1) - the catalytic core - and CF(0) - the membrane proton channel. CF(1) has five subunits: alpha(3), beta(3), gamma(1), delta(1), epsilon(1). CF(0) has three main subunits: a(1), b(2) and c(9-12). The alpha and beta chains form an alternating ring which encloses part of the gamma chain. CF(1) is attached to CF(0) by a central stalk formed by the gamma and epsilon chains, while a peripheral stalk is formed by the delta and b chains.

It localises to the cell inner membrane. It carries out the reaction ATP + H2O + 4 H(+)(in) = ADP + phosphate + 5 H(+)(out). Its function is as follows. Produces ATP from ADP in the presence of a proton gradient across the membrane. The alpha chain is a regulatory subunit. The protein is ATP synthase subunit alpha of Helicobacter pylori (strain G27).